The sequence spans 106 residues: Nucleoid-associated protein DP1429 (106 aa).

This sequence belongs to the YbaB/EbfC family. As to quaternary structure, homodimer.

It localises to the cytoplasm. Its subcellular location is the nucleoid. Its function is as follows. Binds to DNA and alters its conformation. May be involved in regulation of gene expression, nucleoid organization and DNA protection. The sequence is that of Nucleoid-associated protein DP1429 from Desulfotalea psychrophila (strain LSv54 / DSM 12343).